The sequence spans 419 residues: Mitogen-activated protein kinase spm1 (419 aa).

A Protein kinase domain is found at 23–314; that stretch reads YTVTKELGQG…VEEALEHPYL (292 aa). ATP-binding positions include 29–37 and Lys52; that span reads LGQGAYGIV. Catalysis depends on Asp149, which acts as the Proton acceptor.

The protein belongs to the protein kinase superfamily. Ser/Thr protein kinase family. MAP kinase subfamily. The cofactor is Mg(2+). In terms of processing, phosphorylated by the MAP kinase kinase mkk1.

The catalysed reaction is L-seryl-[protein] + ATP = O-phospho-L-seryl-[protein] + ADP + H(+). The enzyme catalyses L-threonyl-[protein] + ATP = O-phospho-L-threonyl-[protein] + ADP + H(+). Functionally, mitogen-activated protein kinase, part of the mkh1-mkk1-spm1 MAPK cascade that regulates vegetative growth, conidial formation, colony surface hydrophobicity, osmotic stress, cell wall integrity maintenance, carbon and nitrogen source utilization, chitin distribution, septa formation, and pathogenicity. The polypeptide is Mitogen-activated protein kinase spm1 (Cytospora mali (Apple Valsa canker fungus)).